The following is a 370-amino-acid chain: Protein rough sheath 2 (370 aa).

2 HTH myb-type domains span residues 1 to 53 (MKER…KNYL) and 54 to 108 (RPGI…EKQQ). 2 DNA-binding regions (H-T-H motif) span residues 27-53 (WHLVSQRMNVALDRDAKSCLERWKNYL) and 81-104 (WKKIAAEVPGRTAKRLGKWWEVFK). The tract at residues 107 to 129 (QQRELRDSRRPPPEPSPDERGRY) is disordered. The stretch at 276–340 (KRVEQQLEME…QVKEEKMAEQ (65 aa)) forms a coiled coil.

Homodimer. Interacts with AS2, WRKY1, HIRA, a probable histone chaperone, and RIK, a predicted RNA binding protein. In terms of tissue distribution, expressed in lateral organ promordia.

It is found in the nucleus. Its function is as follows. Transcription factor required for normal cell differentiation. Interacts directly with asymmetric leaves 2 (AS2) to repress the knox homeobox genes. This chain is Protein rough sheath 2 (RS2), found in Zea mays (Maize).